Here is a 470-residue protein sequence, read N- to C-terminus: Putative multidrug resistance protein MdtD (470 aa).

Over 1–11 (MTELPDNTRWQ) the chain is Periplasmic. A helical membrane pass occupies residues 12–32 (LWIVAFGFFMQSLDTTIVNTA). Topologically, residues 33-48 (LPSMAKSLGESPLHMH) are cytoplasmic. A helical membrane pass occupies residues 49–69 (MVVVSYVLTVAVMLPASGWLA). At 70-76 (DKIGVRN) the chain is on the periplasmic side. Residues 77–97 (IFFAAIVLFTLGSLFCALSGT) traverse the membrane as a helical segment. At 98-101 (LNQL) the chain is on the cytoplasmic side. A helical transmembrane segment spans residues 102–124 (VLARVLQGVGGAMMVPVGRLTVM). At 125-137 (KIVPRAQYMAAMT) the chain is on the periplasmic side. A helical transmembrane segment spans residues 138 to 158 (FVTLPGQIGPLLGPALGGVLV). Topologically, residues 159-164 (EYASWH) are cytoplasmic. A helical membrane pass occupies residues 165–185 (WIFLINIPVGIVGAMATFMLM). Residues 186 to 196 (PNYTIETRRFD) are Periplasmic-facing. A helical membrane pass occupies residues 197-217 (LPGFLLLAIGMAVLTLALDGS). The Cytoplasmic segment spans residues 218–224 (KSMGISP). A helical transmembrane segment spans residues 225 to 245 (WTLAGLAAGGAAAILLYLFHA). At 246-262 (KKNSGALFSLRLFRTPT) the chain is on the periplasmic side. A helical transmembrane segment spans residues 263-283 (FSLGLLGSFAGRIGSGMLPFM). Over 284-285 (TP) the chain is Cytoplasmic. The chain crosses the membrane as a helical span at residues 286 to 306 (VFLQIGLGFSPFHAGLMMIPM). Residues 307–341 (VLGSMGMKRIVVQIVNRFGYRRVLVATTLGLALVS) are Periplasmic-facing. A helical membrane pass occupies residues 342–362 (LLFMSVALLGWYYLLPLVLLL). The Cytoplasmic segment spans residues 363-395 (QGMVNSARFSSMNTLTLKDLPDTLASSGNSLLS). The chain crosses the membrane as a helical span at residues 396 to 416 (MIMQLSMSIGVTIAGMLLGMF). The Periplasmic segment spans residues 417 to 430 (GQQHIGIDSSATHH). A helical membrane pass occupies residues 431-451 (VFMYTWLCMAVIIALPAIIFA). At 452–470 (RVPNDTQQNMVISRRKRSL) the chain is on the cytoplasmic side.

The protein belongs to the major facilitator superfamily. TCR/Tet family.

The protein resides in the cell inner membrane. The protein is Putative multidrug resistance protein MdtD of Salmonella agona (strain SL483).